Here is a 1397-residue protein sequence, read N- to C-terminus: ABC transporter G family member 41 (1397 aa).

An ABC transporter 1 domain is found at 138–411 (SLSKFVCSKK…FEGCGFKCPE (274 aa)). 171–178 (GPPGCGKT) contributes to the ATP binding site. Residues 489–701 (EMLKACSRRE…AEIGLTANEF (213 aa)) form the ABC transmembrane type-2 1 domain. 6 consecutive transmembrane segments (helical) span residues 507–527 (FIYL…MTVF), 549–570 (ALFR…RLGV), 594–614 (IPLS…VIGY), 625–645 (FIIL…IASI), 651–671 (ACSI…GFVI), and 735–755 (TAFG…TLAL). The 246-residue stretch at 805-1050 (VTFQNVQYYI…VIKYFESIPG (246 aa)) folds into the ABC transporter 2 domain. 842-849 (GVSGAGKT) is an ATP binding site. The ABC transmembrane type-2 2 domain occupies 1122–1336 (GQLKACLWKQ…VLEGLLSSQY (215 aa)). Helical transmembrane passes span 1141–1161 (HNLT…LLFW), 1173–1193 (LFSI…NNCA), 1229–1249 (VPYS…MIGY), 1260–1280 (LYSI…MVAL), 1286–1306 (MALT…GFVM), 1314–1334 (WWIW…LLSS), and 1369–1389 (VVAF…AFFM).

The protein belongs to the ABC transporter superfamily. ABCG family. PDR (TC 3.A.1.205) subfamily. As to expression, confined to roots.

It localises to the membrane. May be a general defense protein. In Arabidopsis thaliana (Mouse-ear cress), this protein is ABC transporter G family member 41 (ABCG41).